The chain runs to 372 residues: Cytochrome b (372 aa).

4 helical membrane-spanning segments follow: residues 25-45 (FGSM…FLAI), 69-90 (WIMQ…YTHI), 105-125 (WLSG…GYVL), and 170-190 (FFAL…IHIM). Heme b contacts are provided by H75 and H89. The heme b site is built by H174 and H188. An a ubiquinone-binding site is contributed by H193. The next 4 membrane-spanning stretches (helical) occupy residues 218–238 (YKDM…MSFM), 280–300 (LGGT…PFTH), 312–332 (ITQV…WTAT), and 339–358 (FILI…IIHP).

The protein belongs to the cytochrome b family. In terms of assembly, the cytochrome bc1 complex contains 3 respiratory subunits (MT-CYB, CYC1 and UQCRFS1), 2 core proteins (UQCRC1 and UQCRC2) and probably 6 low-molecular weight proteins. It depends on heme b as a cofactor.

The protein resides in the mitochondrion inner membrane. Functionally, component of the ubiquinol-cytochrome c reductase complex (complex III or cytochrome b-c1 complex) that is part of the mitochondrial respiratory chain. The b-c1 complex mediates electron transfer from ubiquinol to cytochrome c. Contributes to the generation of a proton gradient across the mitochondrial membrane that is then used for ATP synthesis. The sequence is that of Cytochrome b (MT-CYB) from Pseudechis australis (Mulga snake).